Here is an 85-residue protein sequence, read N- to C-terminus: Toxin BmKAEP (85 aa).

The signal sequence occupies residues 1-21 (MKLFLLLVISASMLIDGLVNA). Residues 22 to 82 (DGYIRGSNGC…TWKSESNTCG (61 aa)) form the LCN-type CS-alpha/beta domain. Cystine bridges form between Cys-31–Cys-81, Cys-35–Cys-56, Cys-42–Cys-63, and Cys-46–Cys-65. Glycine amide is present on Gly-82.

As to expression, expressed by the venom gland.

The protein resides in the secreted. Functionally, shows anti-epileptic activity. Shares high homology with depressant insect toxins, but shows very weak toxicity against mammals and insects and no obvious symptoms on insect larvae. May target voltage-gated sodium channel (Nav). This Olivierus martensii (Manchurian scorpion) protein is Toxin BmKAEP.